The following is a 236-amino-acid chain: uncharacterized protein (236 aa).

The protein localises to the virion. This is an uncharacterized protein from Acanthamoeba polyphaga (Amoeba).